The primary structure comprises 350 residues: S-adenosylmethionine:tRNA ribosyltransferase-isomerase (350 aa).

The protein belongs to the QueA family. In terms of assembly, monomer.

The protein resides in the cytoplasm. The catalysed reaction is 7-aminomethyl-7-carbaguanosine(34) in tRNA + S-adenosyl-L-methionine = epoxyqueuosine(34) in tRNA + adenine + L-methionine + 2 H(+). It participates in tRNA modification; tRNA-queuosine biosynthesis. In terms of biological role, transfers and isomerizes the ribose moiety from AdoMet to the 7-aminomethyl group of 7-deazaguanine (preQ1-tRNA) to give epoxyqueuosine (oQ-tRNA). This Bacillus cereus (strain ZK / E33L) protein is S-adenosylmethionine:tRNA ribosyltransferase-isomerase.